The primary structure comprises 614 residues: Lamin-2 (614 aa).

A compositionally biased stretch (basic residues) spans M1–G10. The segment at M1 to T51 is disordered. The segment at M1 to L76 is head. The span at A21–T37 shows a compositional bias: low complexity. Positions S77–S117 are coil 1A. Residues E81–L433 enclose the IF rod domain. Residues S118–K128 form a linker 1 region. Residues E129 to R268 form a coil 1B region. The interval R269–K286 is linker 2. Positions I287 to L426 are coil 2. Residues R427 to C611 form a tail region. The segment at L433–R454 is disordered. Residues R449–S458 carry the Nuclear localization signal motif. The LTD domain maps to T462–S581. Residue C611 is the site of S-farnesyl cysteine attachment. Residues V612–M614 constitute a propeptide, removed in mature form.

This sequence belongs to the intermediate filament family.

The protein localises to the nucleus inner membrane. Its function is as follows. Intermediate filament (IF) protein, component of the nuclear lamina, a fibrous layer on the nucleoplasmic side of the inner nuclear membrane, which is thought to provide a framework for the nuclear envelope. The polypeptide is Lamin-2 (Hypsibius exemplaris (Freshwater tardigrade)).